We begin with the raw amino-acid sequence, 331 residues long: Hydroxyacylglutathione hydrolase 1, mitochondrial (331 aa).

Residues 1 to 76 (MPVISKASST…HFCSISNMPS (76 aa)) constitute a mitochondrion transit peptide. 2 residues coordinate Zn(2+): His131 and His133. Fe cation contacts are provided by Asp135 and His136. The Zn(2+) site is built by His189 and Asp208. Residue Asp208 coordinates Fe cation. 246–248 (REN) is a binding site for substrate.

The protein belongs to the metallo-beta-lactamase superfamily. Glyoxalase II family. Fe(2+) serves as cofactor. It depends on Fe(3+) as a cofactor. The cofactor is Zn(2+). In terms of tissue distribution, mainly expressed in roots, flowers and flower buds. Also detected in leaves.

It localises to the mitochondrion. It carries out the reaction an S-(2-hydroxyacyl)glutathione + H2O = a 2-hydroxy carboxylate + glutathione + H(+). It participates in secondary metabolite metabolism; methylglyoxal degradation; (R)-lactate from methylglyoxal: step 2/2. Thiolesterase that catalyzes the hydrolysis of S-D-lactoyl-glutathione to form glutathione and D-lactic acid. The polypeptide is Hydroxyacylglutathione hydrolase 1, mitochondrial (GLX2-1) (Arabidopsis thaliana (Mouse-ear cress)).